The sequence spans 90 residues: Cell division topological specificity factor (90 aa).

Residues 1 to 21 (MAGFWSKIFGNDEKPSSAQTA) form a disordered region. Residues 10 to 21 (GNDEKPSSAQTA) show a composition bias toward basic and acidic residues.

Belongs to the MinE family.

Prevents the cell division inhibition by proteins MinC and MinD at internal division sites while permitting inhibition at polar sites. This ensures cell division at the proper site by restricting the formation of a division septum at the midpoint of the long axis of the cell. This Acinetobacter baylyi (strain ATCC 33305 / BD413 / ADP1) protein is Cell division topological specificity factor.